Consider the following 297-residue polypeptide: MESDKSLLSAELNSEFEQALYEQMLLKAKQEMQNRLPNTPESKQIRPQPGFCIKTQTSEKAKIFINICKTNDIPAPPDLSEAELVNILESDDPSGYRVPMSIGEPHVEVDNSGNGCTVYDIVINSTFFDKMKSNELFREFFITVAMEGLENKYEMELSRDWRMLKNRKFMGSISDQNIRTKSKPIIQELDTSSSQTLQSKPLISEIQSSPKVPEYTIAAEPSEGHPSFLVAEISLPNVTSVRSLVLDLGEDRIVLWGRPDLYHLDIFLPYNIVQEESGAQFNRDTKVLTITMPVQTI.

This sequence belongs to the PIH1 family.

The protein localises to the nucleus. In terms of biological role, involved in the assembly of C/D box small nucleolar ribonucleoprotein (snoRNP) particles. Recruits the SWI/SNF complex to the core promoter of rRNA genes and enhances pre-rRNA transcription. Mediates interaction of TELO2 with the R2TP complex which is necessary for the stability of MTOR and SMG1. Positively regulates the assembly and activity of the mTORC1 complex. The chain is PIH1 domain-containing protein 1 (pih1d1) from Xenopus laevis (African clawed frog).